Here is a 74-residue protein sequence, read N- to C-terminus: Chitinases 70, 30, and 20.5 kDa (74 aa).

Residues 1–27 (XTSATATYAKTQDWGSCFEGKWTIKNT) form an N-terminus of 70 kDa chitinase region. The interval 28-52 (AACSSYPSWVAGRSYAAGDIVYYTD) is N-terminus of 30 kDa chitinase. Positions 53-74 (XGYTDLPVSRQKMCQNGMVTNC) are N-terminus of 20.5 kDa chitinase.

Belongs to the glycosyl hydrolase 18 family. Chitinase class II subfamily. In terms of assembly, homodimer, but homotrimers and homotetramers could be observed for the 20.5 and 30 kDa chitinases. The 70 kDa chitinase is probably the precursor protein of the 30 and 20.5 kDa chitinases.

The catalysed reaction is Random endo-hydrolysis of N-acetyl-beta-D-glucosaminide (1-&gt;4)-beta-linkages in chitin and chitodextrins.. In terms of biological role, able to cleave chitin oligomers from N=3 to 6. The chain is Chitinases 70, 30, and 20.5 kDa from Streptomyces olivaceoviridis (Streptomyces corchorusii).